The primary structure comprises 321 residues: ATP-dependent 6-phosphofructokinase (321 aa).

An ATP-binding site is contributed by Gly-12. Residues 22 to 26 and 55 to 60 each bind ADP; these read RGVVR and RYSVSD. Residues 73–74 and 103–106 contribute to the ATP site; these read RF and GDGS. A Mg(2+)-binding site is contributed by Asp-104. 127–129 is a binding site for substrate; the sequence is TID. Asp-129 serves as the catalytic Proton acceptor. ADP is bound at residue Arg-156. Substrate contacts are provided by residues Arg-164 and 171 to 173; that span reads MGR. ADP is bound by residues 187–189 and 215–217; these read GCE and KRH. Residues Glu-224, Arg-245, and 251 to 254 contribute to the substrate site; that span reads HVQR.

Belongs to the phosphofructokinase type A (PFKA) family. ATP-dependent PFK group I subfamily. Prokaryotic clade 'B1' sub-subfamily. In terms of assembly, homotetramer. Mg(2+) is required as a cofactor.

Its subcellular location is the cytoplasm. It catalyses the reaction beta-D-fructose 6-phosphate + ATP = beta-D-fructose 1,6-bisphosphate + ADP + H(+). It participates in carbohydrate degradation; glycolysis; D-glyceraldehyde 3-phosphate and glycerone phosphate from D-glucose: step 3/4. With respect to regulation, allosterically activated by ADP and other diphosphonucleosides, and allosterically inhibited by phosphoenolpyruvate. In terms of biological role, catalyzes the phosphorylation of D-fructose 6-phosphate to fructose 1,6-bisphosphate by ATP, the first committing step of glycolysis. The chain is ATP-dependent 6-phosphofructokinase from Mannheimia succiniciproducens (strain KCTC 0769BP / MBEL55E).